Reading from the N-terminus, the 196-residue chain is UPF0215 protein MA_4269 (196 aa).

This sequence belongs to the UPF0215 family.

This chain is UPF0215 protein MA_4269, found in Methanosarcina acetivorans (strain ATCC 35395 / DSM 2834 / JCM 12185 / C2A).